A 395-amino-acid polypeptide reads, in one-letter code: Elongation factor Tu (395 aa).

The 195-residue stretch at 10–204 folds into the tr-type G domain; the sequence is KPHVNIGTIG…AVDSYIPTPE (195 aa). Positions 19 to 26 are G1; that stretch reads GHVDHGKT. 19-26 is a GTP binding site; sequence GHVDHGKT. A Mg(2+)-binding site is contributed by Thr-26. The interval 60 to 64 is G2; the sequence is GITIS. The segment at 81 to 84 is G3; sequence DCPG. GTP is bound by residues 81–85 and 136–139; these read DCPGH and NKCD. The segment at 136-139 is G4; sequence NKCD. The G5 stretch occupies residues 174–176; that stretch reads SAL.

Belongs to the TRAFAC class translation factor GTPase superfamily. Classic translation factor GTPase family. EF-Tu/EF-1A subfamily. As to quaternary structure, monomer.

Its subcellular location is the cytoplasm. The catalysed reaction is GTP + H2O = GDP + phosphate + H(+). Its function is as follows. GTP hydrolase that promotes the GTP-dependent binding of aminoacyl-tRNA to the A-site of ribosomes during protein biosynthesis. The protein is Elongation factor Tu of Listeria monocytogenes serotype 4b (strain CLIP80459).